The following is a 215-amino-acid chain: 7-methyl-GTP pyrophosphatase (215 aa).

Asp-79 serves as the catalytic Proton acceptor.

It belongs to the Maf family. YceF subfamily. A divalent metal cation is required as a cofactor.

It is found in the cytoplasm. It carries out the reaction N(7)-methyl-GTP + H2O = N(7)-methyl-GMP + diphosphate + H(+). Nucleoside triphosphate pyrophosphatase that hydrolyzes 7-methyl-GTP (m(7)GTP). May have a dual role in cell division arrest and in preventing the incorporation of modified nucleotides into cellular nucleic acids. The sequence is that of 7-methyl-GTP pyrophosphatase from Burkholderia thailandensis (strain ATCC 700388 / DSM 13276 / CCUG 48851 / CIP 106301 / E264).